We begin with the raw amino-acid sequence, 347 residues long: Photosystem II protein D1 (347 aa).

3 helical membrane passes run 32 to 49 (YIGW…LATV), 121 to 136 (HFIL…EWEF), and 145 to 159 (WIFV…AASA). Position 121 (histidine 121) interacts with chlorophyll a. Residue tyrosine 129 participates in pheophytin a binding. [CaMn4O5] cluster-binding residues include aspartate 173 and glutamate 192. A helical transmembrane segment spans residues 200–221 (FHILGVAAVFGGSLFSAMHGSL). Histidine 201 lines the chlorophyll a pocket. A quinone-binding positions include histidine 218 and 267–268 (SF). Histidine 218 contributes to the Fe cation binding site. Histidine 275 lines the Fe cation pocket. The helical transmembrane segment at 277-291 (FLAAWPVIGIWFTAL) threads the bilayer. The [CaMn4O5] cluster site is built by histidine 335, glutamate 336, aspartate 345, and alanine 347.

Belongs to the reaction center PufL/M/PsbA/D family. PSII is composed of 1 copy each of membrane proteins PsbA, PsbB, PsbC, PsbD, PsbE, PsbF, PsbH, PsbI, PsbJ, PsbK, PsbL, PsbM, PsbT, PsbX, PsbY, PsbZ, Psb30/Ycf12, at least 3 peripheral proteins of the oxygen-evolving complex and a large number of cofactors. It forms dimeric complexes. The D1/D2 heterodimer binds P680, chlorophylls that are the primary electron donor of PSII, and subsequent electron acceptors. It shares a non-heme iron and each subunit binds pheophytin, quinone, additional chlorophylls, carotenoids and lipids. D1 provides most of the ligands for the Mn4-Ca-O5 cluster of the oxygen-evolving complex (OEC). There is also a Cl(-1) ion associated with D1 and D2, which is required for oxygen evolution. The PSII complex binds additional chlorophylls, carotenoids and specific lipids. is required as a cofactor. Tyr-164 forms a radical intermediate that is referred to as redox-active TyrZ, YZ or Y-Z.

Its subcellular location is the plastid. The protein resides in the chloroplast thylakoid membrane. It carries out the reaction 2 a plastoquinone + 4 hnu + 2 H2O = 2 a plastoquinol + O2. Its function is as follows. Photosystem II (PSII) is a light-driven water:plastoquinone oxidoreductase that uses light energy to abstract electrons from H(2)O, generating O(2) and a proton gradient subsequently used for ATP formation. It consists of a core antenna complex that captures photons, and an electron transfer chain that converts photonic excitation into a charge separation. The D1/D2 (PsbA/PsbD) reaction center heterodimer binds P680, the primary electron donor of PSII as well as several subsequent electron acceptors. The sequence is that of Photosystem II protein D1 from Heterocapsa niei (Dinoflagellate).